Consider the following 119-residue polypeptide: Large ribosomal subunit protein uL18 (119 aa).

The protein belongs to the universal ribosomal protein uL18 family. As to quaternary structure, part of the 50S ribosomal subunit; part of the 5S rRNA/L5/L18/L25 subcomplex. Contacts the 5S and 23S rRNAs.

Its function is as follows. This is one of the proteins that bind and probably mediate the attachment of the 5S RNA into the large ribosomal subunit, where it forms part of the central protuberance. This Anaeromyxobacter dehalogenans (strain 2CP-C) protein is Large ribosomal subunit protein uL18.